A 126-amino-acid polypeptide reads, in one-letter code: Spermidine export protein MdtJ (126 aa).

Transmembrane regions (helical) follow at residues 1–21 (MMIY…GTLS), 32–52 (TGHI…ALAV), 55–75 (VALG…ITVF), and 82–102 (ESLS…IMLV). Residues 104 to 126 (SGTRKPKKPNSPNRNSGEHHATA) form a disordered region.

Belongs to the drug/metabolite transporter (DMT) superfamily. Small multidrug resistance (SMR) (TC 2.A.7.1) family. MdtJ subfamily. As to quaternary structure, forms a complex with MdtI.

It is found in the cell inner membrane. Its function is as follows. Catalyzes the excretion of spermidine. The protein is Spermidine export protein MdtJ of Yersinia enterocolitica serotype O:8 / biotype 1B (strain NCTC 13174 / 8081).